The primary structure comprises 495 residues: MRVGAEYQARIPEFDPGATKYTDKDNGGMLVWSPYHSIPDAKLDEYIAIAKEKHGYNVEQALGMLFWHKHNIEKSLADLPNFTPFPDEWTVEDKVLFEQAFSFHGKSFHRIQQMLPDKTIASLVKYYYSWKKTRSRTSLMDRQARKLANRHNQGDSDDDVEETHPMDGNDSDYDPKKEAKKEGNTEQPVQTSKIGLGRREYQSLQHRHHSQRSKCRPPKGMYLTQEDVVAVSCSPNAANTILRQLDMELISLKRQVQNAKQVNSALKQKMEGGIEEFKPPESNQKINARWTTEEQLLAVQGVRKYGKDFQAIADVIGNKTVGQVKNFFVNYRRRFNLEEVLQEWEAEQGTQASNGDASTLGEETKSASNVPSGKSTDEEEEAQTPQAPRTLGPSPPAPSSTPTPTAPIATLNQPPPLLRPTLPAAPALHRQPPPLQQQARFIQPRPTLNQPPPPLIRPANSMPPRLNPRPVLSTVGGQQPPSLIGIQTDSQSSLH.

Positions 1–83 (MRVGAEYQAR…KSLADLPNFT (83 aa)) constitute an ELM2 domain. Residue K20 forms a Glycyl lysine isopeptide (Lys-Gly) (interchain with G-Cter in SUMO2) linkage. An SANT 1 domain is found at 84-135 (PFPDEWTVEDKVLFEQAFSFHGKSFHRIQQMLPDKTIASLVKYYYSWKKTRS). A disordered region spans residues 147–219 (LANRHNQGDS…SQRSKCRPPK (73 aa)). Phosphoserine is present on residues S156 and S171. The span at 162-184 (ETHPMDGNDSDYDPKKEAKKEGN) shows a compositional bias: basic and acidic residues. Residue K193 forms a Glycyl lysine isopeptide (Lys-Gly) (interchain with G-Cter in SUMO2) linkage. The segment covering 205–217 (QHRHHSQRSKCRP) has biased composition (basic residues). A coiled-coil region spans residues 237–273 (AANTILRQLDMELISLKRQVQNAKQVNSALKQKMEGG). Residue K285 forms a Glycyl lysine isopeptide (Lys-Gly) (interchain with G-Cter in SUMO2) linkage. Residues 285-336 (KINARWTTEEQLLAVQGVRKYGKDFQAIADVIGNKTVGQVKNFFVNYRRRFN) enclose the SANT 2 domain. Positions 346–495 (AEQGTQASNG…IQTDSQSSLH (150 aa)) are disordered. Polar residues predominate over residues 348-357 (QGTQASNGDA). T376 bears the Phosphothreonine mark. The segment covering 393–405 (PSPPAPSSTPTPT) has biased composition (pro residues). Positions 419-428 (RPTLPAAPAL) are enriched in low complexity. 2 positions are modified to asymmetric dimethylarginine: R445 and R457. The span at 475 to 495 (VGGQQPPSLIGIQTDSQSSLH) shows a compositional bias: polar residues.

This sequence belongs to the CoREST family.

The protein resides in the nucleus. Functionally, may act as a component of a corepressor complex that represses transcription. This chain is REST corepressor 3 (RCOR3), found in Homo sapiens (Human).